A 351-amino-acid chain; its full sequence is C-X-C chemokine receptor type 1 (351 aa).

Over 1–46 (MSNITDPQMWDYDGDPNFTGMPPIDEDYRPCRLETETLNKYVVIVT) the chain is Extracellular. N3 is a glycosylation site (N-linked (GlcNAc...) asparagine). A helical membrane pass occupies residues 47 to 67 (YALVFLLSLLGNSLVMLVILY). The Cytoplasmic portion of the chain corresponds to 68 to 76 (SRVGRSVTD). Residues 77–97 (VYLLNLALADLLFALTLPIWA) traverse the membrane as a helical segment. Residues 98–112 (VSKVNGWIFGTLLCK) are Extracellular-facing. C111 and C188 are oxidised to a cystine. A helical transmembrane segment spans residues 113 to 133 (VVSLLKEVNFYSGILLLACIS). Over 134 to 154 (VDRYLAIVHATRTLTQKRHLV) the chain is Cytoplasmic. A helical membrane pass occupies residues 155-175 (KFVCLSCWGLSMILSLPFFLF). Over 176 to 209 (RQAYHPKNSSPVCYEVLGNDTAKWRMVLRILPHT) the chain is Extracellular. N-linked (GlcNAc...) asparagine glycosylation is present at N194. Residues 210–230 (FGFIVPLFVMLFCYGFALCTL) form a helical membrane-spanning segment. Residues 231 to 243 (FKAHMGQKHRAMR) are Cytoplasmic-facing. Residues 244-264 (VIFAVVLIFLLCWLPYNLVLL) traverse the membrane as a helical segment. At 265 to 289 (ADTLMRTQLIKESCERRNDIGWALD) the chain is on the extracellular side. Residues 290-310 (ATEILGFLHSCLNPIIYAFIG) form a helical membrane-spanning segment. At 311 to 351 (QNFRHGFLKILAMHGLVSKEFLARHHVTSYTSSSVNVSSNL) the chain is on the cytoplasmic side.

It belongs to the G-protein coupled receptor 1 family. As to quaternary structure, interacts with IL8. Interacts with GNAI2.

It is found in the cell membrane. Functionally, receptor to interleukin-8, which is a powerful neutrophils chemotactic factor. Binding of IL-8 to the receptor causes activation of neutrophils. This response is mediated via a G-protein that activates a phosphatidylinositol-calcium second messenger system. This chain is C-X-C chemokine receptor type 1 (CXCR1), found in Pongo pygmaeus (Bornean orangutan).